A 410-amino-acid polypeptide reads, in one-letter code: Eukaryotic initiation factor 4A (410 aa).

The Q motif motif lies at 37 to 65 (ESFDSMGLQENLLRGIYAYGFEKPSAIQQ). Residues 68-238 (IVPFCKGLDV…RKFMNKPVRI (171 aa)) enclose the Helicase ATP-binding domain. 81-88 (AQSGTGKT) contributes to the ATP binding site. Positions 186 to 189 (DEAD) match the DEAD box motif. A Helicase C-terminal domain is found at 249–410 (GIKQFYVNID…ELPANVADLL (162 aa)).

Belongs to the DEAD box helicase family. eIF4A subfamily. EIF4F is a multi-subunit complex, the composition of which varies with external and internal environmental conditions. It is composed of at least EIF4A, EIF4E and EIF4G.

The catalysed reaction is ATP + H2O = ADP + phosphate + H(+). ATP-dependent RNA helicase which is a subunit of the eIF4F complex involved in cap recognition and is required for mRNA binding to ribosome. In the current model of translation initiation, eIF4A unwinds RNA secondary structures in the 5'-UTR of mRNAs which is necessary to allow efficient binding of the small ribosomal subunit, and subsequent scanning for the initiator codon. The protein is Eukaryotic initiation factor 4A of Zea mays (Maize).